Reading from the N-terminus, the 947-residue chain is Valine--tRNA ligase (947 aa).

Positions P45–H55 match the 'HIGH' region motif. Positions K591–S595 match the 'KMSKS' region motif. Position 594 (K594) interacts with ATP.

It belongs to the class-I aminoacyl-tRNA synthetase family. ValS type 1 subfamily. As to quaternary structure, monomer.

It localises to the cytoplasm. The catalysed reaction is tRNA(Val) + L-valine + ATP = L-valyl-tRNA(Val) + AMP + diphosphate. Catalyzes the attachment of valine to tRNA(Val). As ValRS can inadvertently accommodate and process structurally similar amino acids such as threonine, to avoid such errors, it has a 'posttransfer' editing activity that hydrolyzes mischarged Thr-tRNA(Val) in a tRNA-dependent manner. This chain is Valine--tRNA ligase, found in Rhizobium meliloti (strain 1021) (Ensifer meliloti).